The sequence spans 521 residues: Phomenoic acid biosynthesis cluster-specific transcriptional regulator (521 aa).

The zn(2)-C6 fungal-type DNA-binding region spans 46 to 76 (HCWQCRRSCVVCDFTQPGCQRCSAAGVSCPG).

It localises to the nucleus. Its function is as follows. Transcriptional regulator; part of the gene cluster that mediates the biosynthesis of phomenoic acid, a long chain aliphatic carboxylic acid that does not appear to be essential for pathogenicity but may play a role in allowing to outcompete other fungi in the environmental niche via its antifungal properties. Positively regulates the expression of the cluster and subsequent production of phomenoic acid. The chain is Phomenoic acid biosynthesis cluster-specific transcriptional regulator from Leptosphaeria maculans (strain JN3 / isolate v23.1.3 / race Av1-4-5-6-7-8) (Blackleg fungus).